The primary structure comprises 238 residues: Ribonuclease PH (238 aa).

Phosphate is bound by residues R86 and 124–126 (GTR).

The protein belongs to the RNase PH family. Homohexameric ring arranged as a trimer of dimers.

It catalyses the reaction tRNA(n+1) + phosphate = tRNA(n) + a ribonucleoside 5'-diphosphate. In terms of biological role, phosphorolytic 3'-5' exoribonuclease that plays an important role in tRNA 3'-end maturation. Removes nucleotide residues following the 3'-CCA terminus of tRNAs; can also add nucleotides to the ends of RNA molecules by using nucleoside diphosphates as substrates, but this may not be physiologically important. Probably plays a role in initiation of 16S rRNA degradation (leading to ribosome degradation) during starvation. The sequence is that of Ribonuclease PH from Actinobacillus pleuropneumoniae serotype 5b (strain L20).